The following is a 2587-amino-acid chain: Clavatol synthase claF (2587 aa).

The tract at residues 93 to 256 is N-terminal acylcarrier protein transacylase domain (SAT); that stretch reads LLSPLVVIVQ…TEVALSGRFH (164 aa). The active-site Nucleophile; for transacylase activity is the Cys-137. His-256 acts as the Proton donor/acceptor; for transacylase activity in catalysis. Positions 383 to 799 constitute a Ketosynthase family 3 (KS3) domain; the sequence is DDQIAVIGMA…GSNASMIITQ (417 aa). Active-site for beta-ketoacyl synthase activity residues include Cys-548, His-683, and His-722. Residues 912–1222 form a malonyl-CoA:ACP transacylase (MAT) domain region; the sequence is CFGGQISTYV…ESLPLLAEAT (311 aa). Residues 1284–1416 form an N-terminal hotdog fold region; it reads PKGLTTFIGF…GSIVFLPASD (133 aa). The PKS/mFAS DH domain occupies 1284-1595; sequence PKGLTTFIGF…YRLVPMDSMR (312 aa). The product template (PT) domain stretch occupies residues 1315–1593; that stretch reads LTSANVALNT…ISYRLVPMDS (279 aa). Residues 1436-1595 form a C-terminal hotdog fold region; that stretch reads ASLLQGNGAD…YRLVPMDSMR (160 aa). Positions 1609–1635 are disordered; sequence STAAVSSKSTPVHAPTPTTTVSSTPSS. Residues 1617 to 1635 are compositionally biased toward low complexity; that stretch reads STPVHAPTPTTTVSSTPSS. Positions 1654–1728 constitute a Carrier domain; that stretch reads PDISAKMCEI…SLVSCIRSTL (75 aa). Ser-1688 carries the post-translational modification O-(pantetheine 4'-phosphoryl)serine. Residues Tyr-1947, His-2059, and Glu-2085 each act as for methyltransferase activity in the active site. Residues 1952-2126 form a methyltransferase (CMeT) domain region; sequence VNTVWIKQLE…ATYWEKVLQS (175 aa). The tract at residues 2208–2452 is NADPH-binding (R) domain; that stretch reads SLSSGQCVLV…KILPELDGTL (245 aa).

Pantetheine 4'-phosphate is required as a cofactor.

The enzyme catalyses 3 malonyl-CoA + acetyl-CoA + AH2 + 2 S-adenosyl-L-methionine + H(+) = clavatol + A + 2 S-adenosyl-L-homocysteine + 3 CO2 + 4 CoA + H2O. Its pathway is secondary metabolite biosynthesis. Functionally, non-reducing polyketide synthase; part of the cla gene cluster that produces clavatol and ortho-quinone methide. The clavatol biosynthesis cluster cla and the terrestric acid cluster tra are both involved in the production of peniphenones and penilactones. The non-reducing PKS claF is responsible for the formation of clavatol from successive condensations of 3 malonyl-CoA units, presumably with a simple acetyl-CoA starter unit, and 2 methylation steps. The esterase claE probably collaborates with claF by catalyzing the hydrolysis of ACP-bound acyl intermediates to free the ACP from stalled intermediates. The clavatol oxidase claD then converts clavatol to hydroxyclavatol. Spontaneous dehydration of hydroxyclavatol leads to the accumulation of the highly active ortho-quinone methide. On the other hand, the PKS-NRPS hybrid traA is involved in the formation of crustosic acid, with the help of traB and traD. The polyketide synthase module (PKS) of traA is responsible for the synthesis of the polyketide backbone via the condensation of an acetyl-CoA starter unit with 3 malonyl-CoA units. The downstream nonribosomal peptide synthetase (NRPS) module then amidates the carboxyl end of the polyketide with L-malic acid. Because traA lacks a designated enoylreductase (ER) domain, the required activity is provided the enoyl reductase traG. Crustosic acid undergoes decarboxylation and isomerization to the terrestric acid, catalyzed by the 2-oxoglutarate-dependent dioxygenase traH. Both acids are further converted to the 2 gamma-butyrolactones (R)-5-methyltetronic acid and (S)-5-carboxylmethyltetronic acid, with involvement of the cytochrome P450 monooxygenase claJ. Spontaneous addition of the methide to these gamma-butyrolactones leads to peniphenone D and penilactone D, which undergo again stereospecific attacking by methide to give penilactones A and B. The sequence is that of Clavatol synthase claF from Penicillium crustosum (Blue mold fungus).